A 102-amino-acid chain; its full sequence is MSAQRIRIKLRSYDHRLLDQSAKRIVEVAKRTGAKVAGPIPLPTDRRVYCVTRSPHIDKDSREHFEIKMHKRLIDIIDPTQETVSNLMSLELPAGVDIHLKL.

This sequence belongs to the universal ribosomal protein uS10 family. In terms of assembly, part of the 30S ribosomal subunit.

Its function is as follows. Involved in the binding of tRNA to the ribosomes. The chain is Small ribosomal subunit protein uS10 from Coprothermobacter proteolyticus (strain ATCC 35245 / DSM 5265 / OCM 4 / BT).